The primary structure comprises 1645 residues: Cortactin-binding protein 2 (1645 aa).

5 disordered regions span residues 1–28 (MATD…EAAK), 269–293 (LKRG…SVSI), 366–435 (IVSS…AALH), 451–478 (GNAN…SRDS), and 492–612 (ALSR…PPKP). Positions 119 to 276 (RKMQERMSTQ…EQLKRGNDSK (158 aa)) form a coiled coil. Composition is skewed to polar residues over residues 407 to 417 (QTPTIAPQSHA) and 451 to 477 (GNAN…TSRD). Arg-495 carries the post-translational modification Asymmetric dimethylarginine. The span at 580–590 (TMASPPSTLPQ) shows a compositional bias: polar residues. ANK repeat units follow at residues 706–736 (GRPT…DINY), 740–769 (DGHS…QVNA), 773–802 (NGFT…NINH), 806–835 (EGQT…DRSV), 839–868 (DGWT…PARR), and 909–939 (EGWT…EPER). Residues 868 to 898 (RNSLHEEEPESGVFDLDQGEESPEGTSKPVI) are disordered. The segment at 1442-1479 (CSRKKGESGAWRKVSTSPRKKSGRFSPPSWSKPGPSEE) is disordered. Ser-1521 is subject to Phosphoserine. A disordered region spans residues 1551-1645 (DDLRSFDSPG…EINNNSKEEI (95 aa)). Composition is skewed to polar residues over residues 1558–1569 (SPGNSPAFSATV) and 1582–1597 (PFSS…SQSK). The segment covering 1620-1634 (SQNTKRSSSSSNTRQ) has biased composition (low complexity). Residues 1635-1645 (IEINNNSKEEI) show a composition bias toward polar residues.

Interacts with CTTN/cortactin SH3 domain. Interacts with STRN, STRN4/zinedin and MOB4/phocein; this interactions mediate the association with the STRIPAK core complex and may regulate dendritic spine distribution of the STRIPAK complex in hippocampal neurons. Activation of glutamate receptors weakens the interaction with STRN and STRN4.

The protein resides in the cytoplasm. Its subcellular location is the cell cortex. It localises to the cell projection. It is found in the dendritic spine. Its function is as follows. Regulates the dendritic spine distribution of CTTN/cortactin in hippocampal neurons, and thus controls dendritic spinogenesis and dendritic spine maintenance. Associates with the striatin-interacting phosphatase and kinase (STRIPAK) core complex to regulate dendritic spine distribution of the STRIPAK complex in hippocampal neurons. The polypeptide is Cortactin-binding protein 2 (CTTNBP2) (Mustela putorius furo (European domestic ferret)).